The primary structure comprises 229 residues: Cytochrome c oxidase subunit 2 (229 aa).

At 1-26 (MATWMNINLQDANSSTMEQLTMFHDH) the chain is on the mitochondrial intermembrane side. Residues 27 to 48 (TLMILTMITSIVTFIMVSMTTN) form a helical membrane-spanning segment. The Mitochondrial matrix segment spans residues 49–62 (TLINRYLLEGQTIE). Residues 63–82 (FIWTTIPAITLIFIALPSLH) form a helical membrane-spanning segment. The Mitochondrial intermembrane segment spans residues 83–229 (LLYLIDEINN…LKWINKSLSS (147 aa)). H161, C196, E198, C200, H204, and M207 together coordinate Cu cation. E198 lines the Mg(2+) pocket.

It belongs to the cytochrome c oxidase subunit 2 family. In terms of assembly, component of the cytochrome c oxidase (complex IV, CIV), a multisubunit enzyme composed of a catalytic core of 3 subunits and several supernumerary subunits. The complex exists as a monomer or a dimer and forms supercomplexes (SCs) in the inner mitochondrial membrane with ubiquinol-cytochrome c oxidoreductase (cytochrome b-c1 complex, complex III, CIII). The cofactor is Cu cation.

It localises to the mitochondrion inner membrane. The catalysed reaction is 4 Fe(II)-[cytochrome c] + O2 + 8 H(+)(in) = 4 Fe(III)-[cytochrome c] + 2 H2O + 4 H(+)(out). Component of the cytochrome c oxidase, the last enzyme in the mitochondrial electron transport chain which drives oxidative phosphorylation. The respiratory chain contains 3 multisubunit complexes succinate dehydrogenase (complex II, CII), ubiquinol-cytochrome c oxidoreductase (cytochrome b-c1 complex, complex III, CIII) and cytochrome c oxidase (complex IV, CIV), that cooperate to transfer electrons derived from NADH and succinate to molecular oxygen, creating an electrochemical gradient over the inner membrane that drives transmembrane transport and the ATP synthase. Cytochrome c oxidase is the component of the respiratory chain that catalyzes the reduction of oxygen to water. Electrons originating from reduced cytochrome c in the intermembrane space (IMS) are transferred via the dinuclear copper A center (CU(A)) of subunit 2 and heme A of subunit 1 to the active site in subunit 1, a binuclear center (BNC) formed by heme A3 and copper B (CU(B)). The BNC reduces molecular oxygen to 2 water molecules using 4 electrons from cytochrome c in the IMS and 4 protons from the mitochondrial matrix. The protein is Cytochrome c oxidase subunit 2 (COII) of Oncopeltus fasciatus (Large milkweed bug).